We begin with the raw amino-acid sequence, 164 residues long: Transcriptional repressor NrdR (164 aa).

A zinc finger spans residues 3 to 34; the sequence is CPKCNYNKSSVVDSRQAEDGNTIRRRRECEKC. The 91-residue stretch at 49-139 folds into the ATP-cone domain; that stretch reads LLVVKKDGTR…VYKSFKDVDE (91 aa).

The protein belongs to the NrdR family. The cofactor is Zn(2+).

In terms of biological role, negatively regulates transcription of bacterial ribonucleotide reductase nrd genes and operons by binding to NrdR-boxes. The sequence is that of Transcriptional repressor NrdR from Streptococcus uberis (strain ATCC BAA-854 / 0140J).